Consider the following 68-residue polypeptide: Large ribosomal subunit protein bL35 (68 aa).

Positions 1 to 25 (MGTKIKTHKGTKKRFRLSAKGKAMH) are enriched in basic residues. A disordered region spans residues 1–43 (MGTKIKTHKGTKKRFRLSAKGKAMHRQSGTSHLAKGLSKKRRR).

Belongs to the bacterial ribosomal protein bL35 family.

The chain is Large ribosomal subunit protein bL35 from Rhodopirellula baltica (strain DSM 10527 / NCIMB 13988 / SH1).